Reading from the N-terminus, the 293-residue chain is Ribosomal protein L11 methyltransferase (293 aa).

Threonine 145, glycine 166, aspartate 188, and asparagine 230 together coordinate S-adenosyl-L-methionine.

Belongs to the methyltransferase superfamily. PrmA family.

Its subcellular location is the cytoplasm. The enzyme catalyses L-lysyl-[protein] + 3 S-adenosyl-L-methionine = N(6),N(6),N(6)-trimethyl-L-lysyl-[protein] + 3 S-adenosyl-L-homocysteine + 3 H(+). In terms of biological role, methylates ribosomal protein L11. The sequence is that of Ribosomal protein L11 methyltransferase from Shewanella putrefaciens (strain CN-32 / ATCC BAA-453).